The following is a 544-amino-acid chain: Chaperonin GroEL 1 (544 aa).

ATP contacts are provided by residues 29 to 32 (TLGP), 86 to 90 (DGTTT), G413, and D495.

Belongs to the chaperonin (HSP60) family. As to quaternary structure, forms a cylinder of 14 subunits composed of two heptameric rings stacked back-to-back. Interacts with the co-chaperonin GroES.

The protein localises to the cytoplasm. The enzyme catalyses ATP + H2O + a folded polypeptide = ADP + phosphate + an unfolded polypeptide.. Functionally, together with its co-chaperonin GroES, plays an essential role in assisting protein folding. The GroEL-GroES system forms a nano-cage that allows encapsulation of the non-native substrate proteins and provides a physical environment optimized to promote and accelerate protein folding. In Synechococcus sp. (strain ATCC 27144 / PCC 6301 / SAUG 1402/1) (Anacystis nidulans), this protein is Chaperonin GroEL 1.